The primary structure comprises 490 residues: O-acetyltransferase PaAT-2 (490 aa).

Residue His-165 is the Proton acceptor of the active site.

It belongs to the plant acyltransferase family.

Its pathway is mycotoxin biosynthesis. Its function is as follows. O-acetyltransferase; part of the 2 gene clusters that mediate the biosynthesis of fusicoccins, diterpene glucosides that display phytohormone-like activity and function as potent activators of plasma membrane H(+)-ATPases in plants by modifying 14-3-3 proteins and cause the plant disease constriction canker. The first step in the pathway is performed by the fusicoccadiene synthase PaFS that possesses both prenyl transferase and terpene cyclase activity, converting isopentenyl diphosphate and dimethylallyl diphosphate into geranylgeranyl diphosphate (GGDP) and successively converting GGDP into fusicocca-2,10(14)-diene, a precursor for fusicoccin H. The second step is the oxidation at the C-8 position by the cytochrome P450 monooxygenase PaP450-2 to yield fusicocca-2,10(14)-diene-8-beta-ol. The cytochrome P450 monooxygenase PaP450-1 then catalyzes the hydroxylation at the C-16 position to produce fusicocca-2,10(14)-diene-8-beta,16-diol. The dioxygenase fc-dox then catalyzes the 16-oxydation of fusicocca-2,10(14)-diene-8-beta,16-diol to yield an aldehyde (8-beta-hydroxyfusicocca-1,10(14)-dien-16-al). The short-chain dehydrogenase/reductase fc-sdr catalyzes the reduction of the aldehyde to yield fusicocca-1,10(14)-diene-8-beta,16-diol. The next step is the hydroxylation at C-9 performed by the cytochrome P450 monooxygenase PaP450-3 that leads to fusicoccin H aglycon which is glycosylated to fusicoccin H by the O-glycosyltransferase PaGT. Hydroxylation at C-12 by the cytochrome P450 monooxygenase PaP450-4 leads then to the production of fusicoccin Q and is followed by methylation by the O-methyltransferase PaMT to yield fusicoccin P. Fusicoccin P is further converted to fusicoccin J via prenylation by the O-glucose prenyltransferase PaPT. Cytochrome P450 monooxygenase PaP450-5 then performs hydroxylation at C-19 to yield dideacetyl-fusicoccin A which is acetylated to 3'-O-deacetyl-fusicoccin A by the O-acetyltransferase PaAT-2. Finally, a another acetylation by the O-acetyltransferase PaAT-1 yields fusicoccin A. In Phomopsis amygdali (Fusicoccum amygdali), this protein is O-acetyltransferase PaAT-2.